A 432-amino-acid chain; its full sequence is Glutamyl-tRNA reductase (432 aa).

Residues 55–58, serine 114, 119–121, and glutamine 125 each bind substrate; these read TCNR and ETQ. The Nucleophile role is filled by cysteine 56. An NADP(+)-binding site is contributed by 194 to 199; it reads GAGEMI.

This sequence belongs to the glutamyl-tRNA reductase family. Homodimer.

It carries out the reaction (S)-4-amino-5-oxopentanoate + tRNA(Glu) + NADP(+) = L-glutamyl-tRNA(Glu) + NADPH + H(+). It participates in porphyrin-containing compound metabolism; protoporphyrin-IX biosynthesis; 5-aminolevulinate from L-glutamyl-tRNA(Glu): step 1/2. Catalyzes the NADPH-dependent reduction of glutamyl-tRNA(Glu) to glutamate 1-semialdehyde (GSA). This is Glutamyl-tRNA reductase from Burkholderia multivorans (strain ATCC 17616 / 249).